The primary structure comprises 119 residues: MRIYETMFIIKPDIAEEEREKIAQGVVDYLKEKLGAHVDNVDRWGIRKTAYPLKKYNEADYTIVYFRGEGLDITVLESYFRVRPEFLRWQTFRRIDLEKKEKKQSRKEEGSENSEKVEE.

Residues 99-119 form a disordered region; it reads KKEKKQSRKEEGSENSEKVEE.

It belongs to the bacterial ribosomal protein bS6 family.

Functionally, binds together with bS18 to 16S ribosomal RNA. The sequence is that of Small ribosomal subunit protein bS6 from Thermosipho melanesiensis (strain DSM 12029 / CIP 104789 / BI429).